We begin with the raw amino-acid sequence, 176 residues long: Inner membrane-spanning protein YciB (176 aa).

A run of 5 helical transmembrane segments spans residues 23-43 (MIAAAAVALVAGVVQAAFLYW), 50-70 (TMQWVGLVLIVVFGGATIVLG), 74-94 (FIMWKPTVLFWCGALFLLGSH), 119-139 (LTYMWVGFLIFMGIANWFVFT), and 150-170 (MFGSTALMLFFFIIQGIYLST).

This sequence belongs to the YciB family.

The protein resides in the cell inner membrane. In terms of biological role, plays a role in cell envelope biogenesis, maintenance of cell envelope integrity and membrane homeostasis. The polypeptide is Inner membrane-spanning protein YciB (Neisseria gonorrhoeae (strain ATCC 700825 / FA 1090)).